A 167-amino-acid polypeptide reads, in one-letter code: MAHIEKQAGELQEKLIAVNRVSKTVKGGRIFSFTALTVVGDGNGRVGFGYGKAREVPAAIQKAMEKARRNMINVALNNGTLQHPVKGVHTGSRVFMQPASEGTGIIAGGAMRAVLEVAGVHNVLAKAYGSTNPINVVRATIDGLENMNSPEMVAAKRGKSVEEILGK.

Positions 11-74 constitute an S5 DRBM domain; it reads LQEKLIAVNR…EKARRNMINV (64 aa).

This sequence belongs to the universal ribosomal protein uS5 family. As to quaternary structure, part of the 30S ribosomal subunit. Contacts proteins S4 and S8.

In terms of biological role, with S4 and S12 plays an important role in translational accuracy. Its function is as follows. Located at the back of the 30S subunit body where it stabilizes the conformation of the head with respect to the body. In Escherichia coli O139:H28 (strain E24377A / ETEC), this protein is Small ribosomal subunit protein uS5.